Here is a 688-residue protein sequence, read N- to C-terminus: Glycine--tRNA ligase beta subunit (688 aa).

Belongs to the class-II aminoacyl-tRNA synthetase family. Tetramer of two alpha and two beta subunits.

The protein localises to the cytoplasm. The catalysed reaction is tRNA(Gly) + glycine + ATP = glycyl-tRNA(Gly) + AMP + diphosphate. This Aliivibrio fischeri (strain ATCC 700601 / ES114) (Vibrio fischeri) protein is Glycine--tRNA ligase beta subunit.